Consider the following 497-residue polypeptide: MDHATLAMILAIWFISFHFIKLLFSQQTTKLLPPGPKPLPIIGNILEVGKKPHRSFANLAKIHGPLISLRLGSVTTIVVSSADVAKEMFLKKDHPLSNRTIPNSVTAGDHHKLTMSWLPVSPKWRNFRKITAVHLLSPQRLDACQTFRHAKVQQLYEYVQECAQKGQAVDIGKAAFTTSLNLLSKLFFSVELAHHKSHTSQEFKELIWNIMEDIGKPNYADYFPILGCVDPSGIRRRLACSFDKLIAVFQGIICERLAPDSSTTTTTTTDDVLDVLLQLFKQNELTMGEINHLLVDIFDAGTDTTSSTFEWVMTELIRNPEMMEKAQEEIKQVLGKDKQIQESDIINLPYLQAIIKETLRLHPPTVFLLPRKADTDVELYGYIVPKDAQILVNLWAIGRDPNAWQNADIFSPERFIGCEIDVKGRDFGLLPFGAGRRICPGMNLAIRMLTLMLATLLQFFNWKLEGDISPKDLDMDEKFGIALQKTKPLKLIPIPRY.

The helical transmembrane segment at 4 to 24 (ATLAMILAIWFISFHFIKLLF) threads the bilayer. C439 provides a ligand contact to heme.

This sequence belongs to the cytochrome P450 family. Heme is required as a cofactor.

The protein localises to the membrane. The protein operates within pigment biosynthesis; betalain biosynthesis. Its function is as follows. Converts L-DOPA to cyclo-DOPA in the betalain pathway. Provides the cyclo-DOPA moiety of all red betacyanins. This is Cytochrome P450 76AD1 from Beta vulgaris (Sugar beet).